Reading from the N-terminus, the 283-residue chain is MAIGVFDSGVGGLTVHHRLVERFPDADFVYLADQANAPYGGRPGEEIVELTKAGCIRLFEAGCDLVVLACNTAASVALRRLQQTWLPGYRRETGRALNVLGIVVPTIEAATGLPWEHEAERRGEKVEKLDILGVFSTPATARSRVYEIEIDKRRQDVAVFSEPCPELARMIEAGAPREELKAVIEGHVQALRTRIGRAPDRAILGCTHYEIVADLFREALPPGTPLIRQPEATADALARYLDRHPEFDPGRSGLRRFLTTGEPGAQNSLVETFWGGPLSFEPA.

Substrate is bound by residues 7–8 and 39–40; these read DS and YG. Cysteine 70 serves as the catalytic Proton donor/acceptor. A substrate-binding site is contributed by 71 to 72; that stretch reads NT. Cysteine 206 functions as the Proton donor/acceptor in the catalytic mechanism. Substrate is bound at residue 207–208; sequence TH.

The protein belongs to the aspartate/glutamate racemases family.

It carries out the reaction L-glutamate = D-glutamate. Its pathway is cell wall biogenesis; peptidoglycan biosynthesis. Its function is as follows. Provides the (R)-glutamate required for cell wall biosynthesis. This Phenylobacterium zucineum (strain HLK1) protein is Glutamate racemase.